Reading from the N-terminus, the 199-residue chain is MTKVKICGLSTEEAVETAVSAGADYIGFVFAPSKRQVTLEEAAELAKLIPSDVKKVGVFVSPSRVELLEAIDKVGLDLVQVHGQVADDLFENLPCASIQAVQVDGNGHVPNSQADYLLFDAPVAGSGQPFDWGQLDTTGLAQPFFIAGGLNEDNVVKAIQHFTPYAVDVSSGVETDGQKDHEKIRRFIERVKHGISGTK.

It belongs to the TrpF family.

The enzyme catalyses N-(5-phospho-beta-D-ribosyl)anthranilate = 1-(2-carboxyphenylamino)-1-deoxy-D-ribulose 5-phosphate. Its pathway is amino-acid biosynthesis; L-tryptophan biosynthesis; L-tryptophan from chorismate: step 3/5. The chain is N-(5'-phosphoribosyl)anthranilate isomerase from Streptococcus pneumoniae (strain Hungary19A-6).